We begin with the raw amino-acid sequence, 165 residues long: Cyclic pyranopterin monophosphate synthase (165 aa).

Substrate-binding positions include Phe83–His85 and Met120–Glu121. The active site involves Asp135.

This sequence belongs to the MoaC family. In terms of assembly, homohexamer; trimer of dimers.

It carries out the reaction (8S)-3',8-cyclo-7,8-dihydroguanosine 5'-triphosphate = cyclic pyranopterin phosphate + diphosphate. The protein operates within cofactor biosynthesis; molybdopterin biosynthesis. Its function is as follows. Catalyzes the conversion of (8S)-3',8-cyclo-7,8-dihydroguanosine 5'-triphosphate to cyclic pyranopterin monophosphate (cPMP). The sequence is that of Cyclic pyranopterin monophosphate synthase from Xanthomonas axonopodis pv. citri (strain 306).